A 1074-amino-acid polypeptide reads, in one-letter code: Carbamoyl phosphate synthase large chain (1074 aa).

The carboxyphosphate synthetic domain stretch occupies residues 1–399; that stretch reads MPKRSDIKKV…ALMKAIRSLD (399 aa). 12 residues coordinate ATP: Arg129, Arg169, Gly175, Gly176, Glu208, Val210, Glu215, Gly241, Ile242, His243, Gln284, and Glu296. Residues 133 to 325 enclose the ATP-grasp 1 domain; that stretch reads KKAMERIGEP…IARVTAKIAI (193 aa). Mg(2+)-binding residues include Gln284, Glu296, and Asn298. Residues Gln284, Glu296, and Asn298 each coordinate Mn(2+). An oligomerization domain region spans residues 400 to 543; that stretch reads IDIDLGYNGK…YSTYDEECEL (144 aa). Positions 544-933 are carbamoyl phosphate synthetic domain; that stretch reads NPSDNKKVLI…FKAEMSAENN (390 aa). The ATP-grasp 2 domain maps to 674–865; sequence NKLLNKLGIP…LAKIAAKVMA (192 aa). ATP-binding residues include Arg710, Asp749, Leu751, Glu756, Gly781, Ile782, His783, Ser784, Gln824, and Glu836. Positions 824, 836, and 838 each coordinate Mg(2+). The Mn(2+) site is built by Gln824, Glu836, and Asn838. One can recognise an MGS-like domain in the interval 932–1074; the sequence is NNLPLDGIVF…YHREVRYRAL (143 aa). The tract at residues 934 to 1074 is allosteric domain; sequence LPLDGIVFIS…YHREVRYRAL (141 aa).

Belongs to the CarB family. As to quaternary structure, composed of two chains; the small (or glutamine) chain promotes the hydrolysis of glutamine to ammonia, which is used by the large (or ammonia) chain to synthesize carbamoyl phosphate. Tetramer of heterodimers (alpha,beta)4. Mg(2+) is required as a cofactor. Mn(2+) serves as cofactor.

The catalysed reaction is hydrogencarbonate + L-glutamine + 2 ATP + H2O = carbamoyl phosphate + L-glutamate + 2 ADP + phosphate + 2 H(+). The enzyme catalyses hydrogencarbonate + NH4(+) + 2 ATP = carbamoyl phosphate + 2 ADP + phosphate + 2 H(+). It participates in amino-acid biosynthesis; L-arginine biosynthesis; carbamoyl phosphate from bicarbonate: step 1/1. It functions in the pathway pyrimidine metabolism; UMP biosynthesis via de novo pathway; (S)-dihydroorotate from bicarbonate: step 1/3. Its function is as follows. Large subunit of the glutamine-dependent carbamoyl phosphate synthetase (CPSase). CPSase catalyzes the formation of carbamoyl phosphate from the ammonia moiety of glutamine, carbonate, and phosphate donated by ATP, constituting the first step of 2 biosynthetic pathways, one leading to arginine and/or urea and the other to pyrimidine nucleotides. The large subunit (synthetase) binds the substrates ammonia (free or transferred from glutamine from the small subunit), hydrogencarbonate and ATP and carries out an ATP-coupled ligase reaction, activating hydrogencarbonate by forming carboxy phosphate which reacts with ammonia to form carbamoyl phosphate. This Methanothrix thermoacetophila (strain DSM 6194 / JCM 14653 / NBRC 101360 / PT) (Methanosaeta thermophila) protein is Carbamoyl phosphate synthase large chain.